The primary structure comprises 139 residues: Acidic phospholipase A2 S1E6-c (139 aa).

The first 16 residues, 1–16, serve as a signal peptide directing secretion; the sequence is MRTLWILAVLLVGVEG. Cystine bridges form between Cys-42–Cys-132, Cys-44–Cys-60, Cys-59–Cys-111, Cys-65–Cys-139, Cys-66–Cys-104, Cys-73–Cys-97, and Cys-91–Cys-102. Tyr-43, Gly-45, and Gly-47 together coordinate Ca(2+). The active site involves His-63. Asp-64 is a binding site for Ca(2+). Asp-105 is a catalytic residue.

This sequence belongs to the phospholipase A2 family. Group II subfamily. D49 sub-subfamily. In terms of assembly, homodimer. It depends on Ca(2+) as a cofactor. As to expression, expressed by the venom gland.

Its subcellular location is the secreted. The catalysed reaction is a 1,2-diacyl-sn-glycero-3-phosphocholine + H2O = a 1-acyl-sn-glycero-3-phosphocholine + a fatty acid + H(+). In terms of biological role, snake venom phospholipase A2 (PLA2) that inhibits ADP-induced platelet aggregation. PLA2 catalyzes the calcium-dependent hydrolysis of the 2-acyl groups in 3-sn-phosphoglycerides. This Calloselasma rhodostoma (Malayan pit viper) protein is Acidic phospholipase A2 S1E6-c.